A 459-amino-acid chain; its full sequence is MDLDTITSISTPMGEGAIGIVRLSGPQAVEIADKLYKGKHLLNDVPSHTINYGHIIDPESKEVVEEVMVSVLRAPKTFTREDIIEINCHGGILTINRVLELTMTYGARLAEPGEFTKRAFLNGRIDLSQAEAVMDFVRSKTDRASKVAMNQIEGRLSDLIKKQRQSILEILAQVEVNIDYPEYDDVEDATTEFLLEQSKEIKQEINRLLDTGAQGKIMREGLSTVIVGKPNVGKSSMLNNLIQDNKAIVTEVAGTTRDVLEEYVNVRGVPLRLVDTAGIRETEDIVEKIGVERSRKALSQADLILFVLNNNEALTQEDYTLYEVVKNEDVIVIVNKMDLEQNIDINEVKDMIGDTPLIQTSMLKQEGIDELEIQIRDLFFGGEVQNQDMTYVSNSRHISLLKQARQTIQDAIDAAESGVPMDMVQIDLTRTWEILGEIIGETASDELIDQLFSQFCLGK.

(6S)-5-formyl-5,6,7,8-tetrahydrofolate is bound by residues arginine 22, glutamate 85, and arginine 124. In terms of domain architecture, TrmE-type G spans 221–380 (GLSTVIVGKP…LEIQIRDLFF (160 aa)). Asparagine 231 is a K(+) binding site. GTP is bound by residues 231–236 (NVGKSS), 250–256 (TEVAGTT), and 275–278 (DTAG). A Mg(2+)-binding site is contributed by serine 235. 3 residues coordinate K(+): threonine 250, valine 252, and threonine 255. Position 256 (threonine 256) interacts with Mg(2+). Lysine 459 is a binding site for (6S)-5-formyl-5,6,7,8-tetrahydrofolate.

It belongs to the TRAFAC class TrmE-Era-EngA-EngB-Septin-like GTPase superfamily. TrmE GTPase family. In terms of assembly, homodimer. Heterotetramer of two MnmE and two MnmG subunits. K(+) serves as cofactor.

It localises to the cytoplasm. Its function is as follows. Exhibits a very high intrinsic GTPase hydrolysis rate. Involved in the addition of a carboxymethylaminomethyl (cmnm) group at the wobble position (U34) of certain tRNAs, forming tRNA-cmnm(5)s(2)U34. This chain is tRNA modification GTPase MnmE, found in Staphylococcus aureus (strain bovine RF122 / ET3-1).